Reading from the N-terminus, the 374-residue chain is uncharacterized protein (374 aa).

The stretch at 298–332 (TKEKLLKLHSEQKSLSEKINKLSGEKDIEQSMINN) forms a coiled coil.

This is an uncharacterized protein from Acanthamoeba polyphaga (Amoeba).